Reading from the N-terminus, the 106-residue chain is Tapetal oleosin GRP-19 (106 aa).

3 helical membrane-spanning segments follow: residues 14–34, 37–57, and 58–78; these read ALAL…ACII, PLFV…TLLA, and SGFT…SWLY. A disordered region spans residues 84–106; sequence RDLPKIPGLTPPAPASNPAGSGV.

Belongs to the oleosin family. Post-translationally, proteolytically cleaved following anther tapetal breakdown. As to expression, present in pollen (at protein level). Inflorescence-specific expression, especially in flowers florets.

The protein localises to the secreted. It is found in the extracellular space. It localises to the extracellular matrix. Its subcellular location is the pollen coat. The protein resides in the lipid droplet. The protein localises to the membrane. Functionally, lipid-binding oleosin involved in anther tapetum development, especially for the physiology of tapetosomes. Also implicated in the formation of pollen coat. The polypeptide is Tapetal oleosin GRP-19 (Arabidopsis thaliana (Mouse-ear cress)).